The sequence spans 81 residues: Accessory gland protein Acp63F (81 aa).

The N-terminal stretch at 1–16 (MKAIIVFILFISSVHA) is a signal peptide.

In terms of tissue distribution, main cells of accessory gland and seminal fluid.

Its subcellular location is the secreted. In terms of biological role, responsible for physiological and behavioral changes in mated female flies. In Drosophila melanogaster (Fruit fly), this protein is Accessory gland protein Acp63F (Acp63F).